Reading from the N-terminus, the 342-residue chain is SWR1-complex protein 5 (342 aa).

Disordered stretches follow at residues 1 to 126, 142 to 178, and 214 to 238; these read MAPT…PVTI, PRTS…DPDS, and LGEN…RMPR. 2 stretches are compositionally biased toward acidic residues: residues 8 to 20 and 33 to 43; these read LAED…DSDF and ISDDDDEEAGE. The segment covering 78-87 has biased composition (basic residues); the sequence is GEKRQKKTKT. Residues 260–341 form the BCNT-C domain; the sequence is NLSMASRLQA…RRARMAQAGK (82 aa).

It belongs to the SWC5 family. In terms of assembly, component of the SWR1 chromatin remodeling complex.

Its subcellular location is the nucleus. Component of the SWR1 complex which mediates the ATP-dependent exchange of histone H2A for the H2A variant H2A.Z leading to transcriptional regulation of selected genes by chromatin remodeling. Involved in chromosome stability. The protein is SWR1-complex protein 5 (crc-2) of Neurospora crassa (strain ATCC 24698 / 74-OR23-1A / CBS 708.71 / DSM 1257 / FGSC 987).